The sequence spans 439 residues: Lipid-A-disaccharide synthase (439 aa).

A disordered region spans residues 1–35 (MKEIGNRESGIVDGQRNGASVGSDPTALPIPHSPL).

It belongs to the LpxB family.

The catalysed reaction is a lipid X + a UDP-2-N,3-O-bis[(3R)-3-hydroxyacyl]-alpha-D-glucosamine = a lipid A disaccharide + UDP + H(+). The protein operates within bacterial outer membrane biogenesis; LPS lipid A biosynthesis. Condensation of UDP-2,3-diacylglucosamine and 2,3-diacylglucosamine-1-phosphate to form lipid A disaccharide, a precursor of lipid A, a phosphorylated glycolipid that anchors the lipopolysaccharide to the outer membrane of the cell. The sequence is that of Lipid-A-disaccharide synthase from Xanthomonas euvesicatoria pv. vesicatoria (strain 85-10) (Xanthomonas campestris pv. vesicatoria).